The chain runs to 1320 residues: CAP-Gly domain-containing linker protein 1 (1320 aa).

The tract at residues 1 to 53 is disordered; that stretch reads MSMLKPSGLKAPTKILKPGSTALKTPAAAAAPLEKTVPSEKASGPPSSETQEE. A compositionally biased stretch (low complexity) spans 21 to 35; sequence TALKTPAAAAAPLEK. Ser-48 carries the phosphoserine modification. Position 50 is a phosphothreonine (Thr-50). The region spanning 78–120 is the CAP-Gly 1 domain; the sequence is GETQFAPGQWAGIVLDEPIGKNDGSVAGVRYFQCEPLKGIFTR. Positions 97–101 are important for tubulin binding; sequence GKNDG. Ser-146 is modified (phosphoserine). Residues 156-171 show a composition bias toward polar residues; sequence VSSSPATPSNIPQKPS. Residues 156-181 are disordered; it reads VSSSPATPSNIPQKPSQPVAKETSAT. Thr-181 is subject to Phosphothreonine. Phosphoserine is present on residues Ser-194, Ser-196, Ser-199, and Ser-203. The CAP-Gly 2 domain maps to 231 to 273; sequence GETDFAKGEWCGVELDEPLGKNDGAVAGTRYFQCQPKYGLFAP. The segment covering 301–331 has biased composition (low complexity); sequence TTPASLKRSPSASSLSSMSSVASSVSSKPSR. The segment at 301 to 338 is disordered; that stretch reads TTPASLKRSPSASSLSSMSSVASSVSSKPSRTGLLTET. A Phosphoserine modification is found at Ser-309. Ser-311 is modified (phosphoserine; by PKA). Residues Ser-314 and Ser-347 each carry the phosphoserine modification. A disordered region spans residues 1089–1109; that stretch reads SLPSNTLRESEYRKDADEEKA. The span at 1096–1109 shows a compositional bias: basic and acidic residues; sequence RESEYRKDADEEKA. At Ser-1116 the chain carries Phosphoserine. Positions 1178 to 1201 are disordered; the sequence is KRQLSSSSGNTDVQTEEDERAQES. Over residues 1180-1190 the composition is skewed to polar residues; that stretch reads QLSSSSGNTDV. Position 1246 is a phosphoserine (Ser-1246). Residues 1299 to 1316 form a CCHC-type zinc finger; the sequence is PYCEICEMFGHWATNCND.

In terms of assembly, interacts with MTOR; phosphorylates and regulates CLIP1. Interacts (via CAP-Gly domains) with tubulin and TUBA1B. Interacts with SLAIN2. Interacts with MAPRE1 and MAPRE3. Interacts (via zinc finger) with DCTN1. Binds preferentially to tyrosinated microtubules, and only marginally to detyrosinated microtubules. In terms of processing, phosphorylated. Phosphorylation induces conformational changes by increasing the affinity of the N-terminus for C-terminus, resulting in inhibition of its function thus decreasing its binding to microtubules and DCTN1. Exhibits a folded, autoinhibited conformation when phosphorylated and an open conformation when dephosphorylated with increased binding affinity to microtubules and DCTN1. Phosphorylation regulates its recruitment to tyrosinated microtubules and the recruitment of vesicular cargo to microtubules in neurons. Phosphorylation by MTOR may positively regulate CLIP1 association with microtubules.

It localises to the cytoplasm. The protein localises to the cytoskeleton. It is found in the cytoplasmic vesicle membrane. The protein resides in the cell projection. Its subcellular location is the ruffle. Its function is as follows. Binds to the plus end of microtubules and regulates the dynamics of the microtubule cytoskeleton. Promotes microtubule growth and microtubule bundling. Links cytoplasmic vesicles to microtubules and thereby plays an important role in intracellular vesicle trafficking. Plays a role macropinocytosis and endosome trafficking. This Rattus norvegicus (Rat) protein is CAP-Gly domain-containing linker protein 1 (Clip1).